The chain runs to 378 residues: Polar flagellin B/D (378 aa).

2 coiled-coil regions span residues 103-128 (SNSKAERVAIQEEVTALNDELNRIAE) and 311-340 (AFQNRFNHAISNLDNINENVNASKSRIKDT).

This sequence belongs to the bacterial flagellin family. As to quaternary structure, heteromer of multiple flagellin subunits including FlaA, FlaB/D, FlaC, FlaE and FlaF.

Its subcellular location is the secreted. It localises to the bacterial flagellum. Flagellin is the subunit protein which polymerizes to form the filaments of bacterial flagella. FlaB/D is not essential for polar flagellar synthesis and swimming motility. Homomer of FlaB/D is not able to form a functional filament. This Vibrio parahaemolyticus serotype O3:K6 (strain RIMD 2210633) protein is Polar flagellin B/D (flaB).